A 694-amino-acid chain; its full sequence is Elongation factor G (694 aa).

Residues Glu10–Leu285 form the tr-type G domain. Residues Ala19–Thr26, Asp83–His87, and Asn137–Asp140 each bind GTP.

It belongs to the TRAFAC class translation factor GTPase superfamily. Classic translation factor GTPase family. EF-G/EF-2 subfamily.

Its subcellular location is the cytoplasm. In terms of biological role, catalyzes the GTP-dependent ribosomal translocation step during translation elongation. During this step, the ribosome changes from the pre-translocational (PRE) to the post-translocational (POST) state as the newly formed A-site-bound peptidyl-tRNA and P-site-bound deacylated tRNA move to the P and E sites, respectively. Catalyzes the coordinated movement of the two tRNA molecules, the mRNA and conformational changes in the ribosome. The chain is Elongation factor G from Lactobacillus delbrueckii subsp. bulgaricus (strain ATCC BAA-365 / Lb-18).